Here is a 340-residue protein sequence, read N- to C-terminus: Protein phosphatase PTC7 homolog fig (340 aa).

Residues 58–314 (RAQAETIQAP…DDITVVLASV (257 aa)) form the PPM-type phosphatase domain. Positions 90, 91, and 236 each coordinate Mn(2+).

It belongs to the PP2C family. Mg(2+) serves as cofactor. The cofactor is Mn(2+).

It catalyses the reaction O-phospho-L-seryl-[protein] + H2O = L-seryl-[protein] + phosphate. The enzyme catalyses O-phospho-L-threonyl-[protein] + H2O = L-threonyl-[protein] + phosphate. The chain is Protein phosphatase PTC7 homolog fig from Drosophila pseudoobscura pseudoobscura (Fruit fly).